Consider the following 267-residue polypeptide: Carboxy-S-adenosyl-L-methionine synthase (267 aa).

Polar residues predominate over residues 1–11 (MPNRDTQSQND). Positions 1-25 (MPNRDTQSQNDTPRHSPEAAEPQRD) are disordered. The segment covering 12–24 (TPRHSPEAAEPQR) has biased composition (basic and acidic residues). S-adenosyl-L-methionine contacts are provided by residues Tyr-59, 84-86 (GCS), 109-110 (DN), 137-138 (DI), Asn-152, and Arg-219.

It belongs to the class I-like SAM-binding methyltransferase superfamily. Cx-SAM synthase family. Homodimer.

It catalyses the reaction prephenate + S-adenosyl-L-methionine = carboxy-S-adenosyl-L-methionine + 3-phenylpyruvate + H2O. Its function is as follows. Catalyzes the conversion of S-adenosyl-L-methionine (SAM) to carboxy-S-adenosyl-L-methionine (Cx-SAM). The protein is Carboxy-S-adenosyl-L-methionine synthase of Yersinia pseudotuberculosis serotype O:1b (strain IP 31758).